A 209-amino-acid chain; its full sequence is Probable nicotinate-nucleotide adenylyltransferase (209 aa).

The protein belongs to the NadD family.

It carries out the reaction nicotinate beta-D-ribonucleotide + ATP + H(+) = deamido-NAD(+) + diphosphate. The protein operates within cofactor biosynthesis; NAD(+) biosynthesis; deamido-NAD(+) from nicotinate D-ribonucleotide: step 1/1. In terms of biological role, catalyzes the reversible adenylation of nicotinate mononucleotide (NaMN) to nicotinic acid adenine dinucleotide (NaAD). The sequence is that of Probable nicotinate-nucleotide adenylyltransferase from Streptococcus pneumoniae serotype 4 (strain ATCC BAA-334 / TIGR4).